The chain runs to 293 residues: Pyridoxal 5'-phosphate synthase subunit PdxS (293 aa).

Aspartate 23 provides a ligand contact to D-ribose 5-phosphate. The Schiff-base intermediate with D-ribose 5-phosphate role is filled by lysine 80. Residue glycine 152 coordinates D-ribose 5-phosphate. Arginine 164 contributes to the D-glyceraldehyde 3-phosphate binding site. Residues glycine 213 and 234–235 (GS) contribute to the D-ribose 5-phosphate site.

The protein belongs to the PdxS/SNZ family. In terms of assembly, in the presence of PdxT, forms a dodecamer of heterodimers.

It catalyses the reaction aldehydo-D-ribose 5-phosphate + D-glyceraldehyde 3-phosphate + L-glutamine = pyridoxal 5'-phosphate + L-glutamate + phosphate + 3 H2O + H(+). The protein operates within cofactor biosynthesis; pyridoxal 5'-phosphate biosynthesis. Catalyzes the formation of pyridoxal 5'-phosphate from ribose 5-phosphate (RBP), glyceraldehyde 3-phosphate (G3P) and ammonia. The ammonia is provided by the PdxT subunit. Can also use ribulose 5-phosphate and dihydroxyacetone phosphate as substrates, resulting from enzyme-catalyzed isomerization of RBP and G3P, respectively. This chain is Pyridoxal 5'-phosphate synthase subunit PdxS, found in Chloroflexus aurantiacus (strain ATCC 29366 / DSM 635 / J-10-fl).